The primary structure comprises 218 residues: MEEGSRSQSPREELELSMLDGPQEELTPLNNDLRIQPNSAEDPSPAQVGKESPWSPCNKSVVGKCKLWMVIVTIFLCFIIVIVISLCLVGVTYIDEDENEILELSSNKTFFITLKIPEECANEEGLHHLLTERLTDTYRQSPSLSRFFTSADILDFSVENATVTYHLQFGVPSEDDDFMKYMMSEELVLGIMRQSFHDKNISTCESLGLDPESLLLYE.

Positions 1–54 (MEEGSRSQSPREELELSMLDGPQEELTPLNNDLRIQPNSAEDPSPAQVGKESPW) are disordered. A helical transmembrane segment spans residues 66–86 (KLWMVIVTIFLCFIIVIVISL).

Its subcellular location is the endoplasmic reticulum membrane. This chain is TPA-induced transmembrane protein homolog, found in Mus musculus (Mouse).